The primary structure comprises 242 residues: Derlin-1 (242 aa).

Residues 1–20 (MSSPAEYYNSLPPISKAYGT) lie on the Cytoplasmic side of the membrane. A helical transmembrane segment spans residues 21-41 (LCFFATVLCQLQILNPPFLAL). The Lumenal portion of the chain corresponds to 42 to 55 (YYPFVFKKFQIWRL). The helical transmembrane segment at 56–76 (FTSFFFLGKFSINFGIRLLMI) threads the bilayer. At 77 to 94 (ARYGVQLEKGAFEKRTAD) the chain is on the cytoplasmic side. Residues 95–115 (FLWMMIFGAISLLALSAIPFL) traverse the membrane as a helical segment. The Lumenal segment spans residues 116–157 (DIYFLGVPMVSMLLYVWSREYPNSQISMYGLVQLRSFYLPWA). Residues 158-178 (MLGLDVIFGSEILPGLLGILV) form a helical membrane-spanning segment. Over 179–242 (GHTYYFLSVL…FRGRSYRLSQ (64 aa)) the chain is Cytoplasmic.

It belongs to the derlin family. In terms of tissue distribution, seedling shoots and roots.

It localises to the endoplasmic reticulum membrane. In terms of biological role, may be involved in the degradation process of specific misfolded endoplasmic reticulum (ER) luminal proteins. This chain is Derlin-1 (DER1), found in Oryza sativa subsp. japonica (Rice).